A 193-amino-acid polypeptide reads, in one-letter code: NADH-quinone oxidoreductase subunit B (193 aa).

Residues cysteine 72, cysteine 73, cysteine 137, and cysteine 167 each contribute to the [4Fe-4S] cluster site.

The protein belongs to the complex I 20 kDa subunit family. As to quaternary structure, NDH-1 is composed of 14 different subunits. Subunits NuoB, C, D, E, F, and G constitute the peripheral sector of the complex. The cofactor is [4Fe-4S] cluster.

The protein localises to the cell inner membrane. The enzyme catalyses a quinone + NADH + 5 H(+)(in) = a quinol + NAD(+) + 4 H(+)(out). Its function is as follows. NDH-1 shuttles electrons from NADH, via FMN and iron-sulfur (Fe-S) centers, to quinones in the respiratory chain. The immediate electron acceptor for the enzyme in this species is believed to be ubiquinone. Couples the redox reaction to proton translocation (for every two electrons transferred, four hydrogen ions are translocated across the cytoplasmic membrane), and thus conserves the redox energy in a proton gradient. This is NADH-quinone oxidoreductase subunit B from Bartonella bacilliformis (strain ATCC 35685 / KC583 / Herrer 020/F12,63).